Consider the following 515-residue polypeptide: 1-pyrroline-5-carboxylate dehydrogenase (515 aa).

Catalysis depends on residues glutamate 286 and cysteine 320.

The protein belongs to the aldehyde dehydrogenase family. RocA subfamily.

It carries out the reaction L-glutamate 5-semialdehyde + NAD(+) + H2O = L-glutamate + NADH + 2 H(+). Its pathway is amino-acid degradation; L-proline degradation into L-glutamate; L-glutamate from L-proline: step 2/2. The polypeptide is 1-pyrroline-5-carboxylate dehydrogenase (Oceanobacillus iheyensis (strain DSM 14371 / CIP 107618 / JCM 11309 / KCTC 3954 / HTE831)).